We begin with the raw amino-acid sequence, 255 residues long: MAKVVICGASGRMGQTLGRMVAESQDLELAGGIDLHPGSFFGAEIVAAKEIEALLASKKPDVLIDFTVAHAAVENVKSAARNNVALIVGTTGFTPEQREVMATAINGHVPAVISSNYSVGVNIFWQLVREAGRLLKDYDIEVIEAHHRNKKDAPSGTAKTILQILDEEAGERRKLYGREGMMERQNEIGVHVIRGGDIVGDHTVMFSKNFETIELSHRAYDRSVFASGALRAARWVVGKKPGIYGMNDVLGLEKT.

NAD(+) is bound by residues 8–13 (GASGRM), 89–91 (GTT), and 114–117 (SSNY). Histidine 146 (proton donor/acceptor) is an active-site residue. Histidine 147 contributes to the (S)-2,3,4,5-tetrahydrodipicolinate binding site. The active-site Proton donor is the lysine 150. 156 to 157 (GT) contributes to the (S)-2,3,4,5-tetrahydrodipicolinate binding site.

Belongs to the DapB family.

It localises to the cytoplasm. It carries out the reaction (S)-2,3,4,5-tetrahydrodipicolinate + NAD(+) + H2O = (2S,4S)-4-hydroxy-2,3,4,5-tetrahydrodipicolinate + NADH + H(+). The enzyme catalyses (S)-2,3,4,5-tetrahydrodipicolinate + NADP(+) + H2O = (2S,4S)-4-hydroxy-2,3,4,5-tetrahydrodipicolinate + NADPH + H(+). The protein operates within amino-acid biosynthesis; L-lysine biosynthesis via DAP pathway; (S)-tetrahydrodipicolinate from L-aspartate: step 4/4. Its function is as follows. Catalyzes the conversion of 4-hydroxy-tetrahydrodipicolinate (HTPA) to tetrahydrodipicolinate. This is 4-hydroxy-tetrahydrodipicolinate reductase from Methanoregula boonei (strain DSM 21154 / JCM 14090 / 6A8).